We begin with the raw amino-acid sequence, 555 residues long: Branched-chain-amino-acid aminotransferase-like protein 1 (555 aa).

It belongs to the class-IV pyridoxal-phosphate-dependent aminotransferase family.

This is Branched-chain-amino-acid aminotransferase-like protein 1 from Arabidopsis thaliana (Mouse-ear cress).